Reading from the N-terminus, the 1164-residue chain is DNA-directed RNA polymerase subunit beta' (1164 aa).

4 residues coordinate Zn(2+): cysteine 60, cysteine 62, cysteine 75, and cysteine 78. 3 residues coordinate Mg(2+): aspartate 449, aspartate 451, and aspartate 453. Zn(2+)-binding residues include cysteine 776, cysteine 850, cysteine 857, and cysteine 860.

Belongs to the RNA polymerase beta' chain family. The RNAP catalytic core consists of 2 alpha, 1 beta, 1 beta' and 1 omega subunit. When a sigma factor is associated with the core the holoenzyme is formed, which can initiate transcription. Requires Mg(2+) as cofactor. Zn(2+) serves as cofactor.

The catalysed reaction is RNA(n) + a ribonucleoside 5'-triphosphate = RNA(n+1) + diphosphate. DNA-dependent RNA polymerase catalyzes the transcription of DNA into RNA using the four ribonucleoside triphosphates as substrates. This Moorella thermoacetica (strain ATCC 39073 / JCM 9320) protein is DNA-directed RNA polymerase subunit beta'.